A 215-amino-acid chain; its full sequence is MKYQLTALEARVIGCLLEKQVTTPEQYPLSVNGVVTACNQKTNREPVMNLSESEVQEQLDNLVKRHYLRTVSGFGNRVTKYEQRFCNSEFGDLKLSAAEVALITTLLLRGAQTPGELRSRAARMYEFSDMAEVESTLEQLANREDGPFVVRLAREPGKRESRYMHLFSGEVEDQPAVTDMSNAVDGDLQARVEALEIEVAELKPRLDSLLAHLGD.

K80 bears the N6-acetyllysine mark.

It belongs to the UPF0502 family.

This chain is UPF0502 protein YceH, found in Shigella boydii serotype 18 (strain CDC 3083-94 / BS512).